Here is a 410-residue protein sequence, read N- to C-terminus: Serine hydroxymethyltransferase (410 aa).

(6S)-5,6,7,8-tetrahydrofolate contacts are provided by residues leucine 116 and 120–122 (GHL). N6-(pyridoxal phosphate)lysine is present on lysine 225. 349-351 (SPF) is a binding site for (6S)-5,6,7,8-tetrahydrofolate.

Belongs to the SHMT family. As to quaternary structure, homodimer. The cofactor is pyridoxal 5'-phosphate.

The protein resides in the cytoplasm. It catalyses the reaction (6R)-5,10-methylene-5,6,7,8-tetrahydrofolate + glycine + H2O = (6S)-5,6,7,8-tetrahydrofolate + L-serine. The protein operates within one-carbon metabolism; tetrahydrofolate interconversion. It functions in the pathway amino-acid biosynthesis; glycine biosynthesis; glycine from L-serine: step 1/1. In terms of biological role, catalyzes the reversible interconversion of serine and glycine with tetrahydrofolate (THF) serving as the one-carbon carrier. This reaction serves as the major source of one-carbon groups required for the biosynthesis of purines, thymidylate, methionine, and other important biomolecules. Also exhibits THF-independent aldolase activity toward beta-hydroxyamino acids, producing glycine and aldehydes, via a retro-aldol mechanism. This chain is Serine hydroxymethyltransferase, found in Leuconostoc citreum (strain KM20).